A 235-amino-acid polypeptide reads, in one-letter code: 5'-methylthioadenosine/S-adenosylhomocysteine nucleosidase (235 aa).

The active-site Proton acceptor is the Glu12. Substrate contacts are provided by residues Gly78, Ile152, and 173 to 174 (ME). Asp197 acts as the Proton donor in catalysis.

Belongs to the PNP/UDP phosphorylase family. MtnN subfamily. In terms of assembly, homodimer.

The catalysed reaction is S-adenosyl-L-homocysteine + H2O = S-(5-deoxy-D-ribos-5-yl)-L-homocysteine + adenine. It carries out the reaction S-methyl-5'-thioadenosine + H2O = 5-(methylsulfanyl)-D-ribose + adenine. It catalyses the reaction 5'-deoxyadenosine + H2O = 5-deoxy-D-ribose + adenine. It functions in the pathway amino-acid biosynthesis; L-methionine biosynthesis via salvage pathway; S-methyl-5-thio-alpha-D-ribose 1-phosphate from S-methyl-5'-thioadenosine (hydrolase route): step 1/2. Its function is as follows. Catalyzes the irreversible cleavage of the glycosidic bond in both 5'-methylthioadenosine (MTA) and S-adenosylhomocysteine (SAH/AdoHcy) to adenine and the corresponding thioribose, 5'-methylthioribose and S-ribosylhomocysteine, respectively. Also cleaves 5'-deoxyadenosine, a toxic by-product of radical S-adenosylmethionine (SAM) enzymes, into 5-deoxyribose and adenine. Thus, is required for in vivo function of the radical SAM enzymes biotin synthase and lipoic acid synthase, that are inhibited by 5'-deoxyadenosine accumulation. This Proteus mirabilis (strain HI4320) protein is 5'-methylthioadenosine/S-adenosylhomocysteine nucleosidase.